The following is a 423-amino-acid chain: Ankyrin repeat and SAM domain-containing protein 4B (423 aa).

The tract at residues 1 to 251 (MSTRYHQAAS…PKDFKEKLHF (251 aa)) is mediates localization to microvilli. 3 ANK repeats span residues 31–60 (DGMT…DPDK), 64–93 (WGNT…NIFA), and 97–126 (DLKS…VQNT). Positions 130 to 169 (KRVTRLKEQALKNARKQMKECERLQERHQNKMARTYSKED) form a coiled coil. Disordered regions lie at residues 158–181 (QNKM…STLS), 207–227 (KSKK…SGQR), and 303–335 (QRQG…AGDL). Over residues 171-181 (GTISSSHSTLS) the composition is skewed to low complexity. Positions 207–224 (KSKKNKDTTEQLEKDGRS) are enriched in basic and acidic residues. Residues 253-352 (VEEDDDVQHE…EWEEDAVDAT (100 aa)) are mediates interaction with MYO7B. Residues 301 to 335 (LFQRQGAAGTVEEEEEEEEEEEEEKREANGTAGDL) are a coiled coil. Residues 311–324 (VEEEEEEEEEEEEE) show a composition bias toward acidic residues. The SAM domain occupies 357 to 409 (FLQSQHLEEFLPIFMREQIDLEALLLCSDEDLQNIHMQLGPRKKVLSAIDKRK). Positions 421-423 (TSL) match the PDZ-binding; mediates interaction with USH1C motif.

As to quaternary structure, part of the IMAC/intermicrovillar adhesion complex/intermicrovillar tip-link complex composed of ANKS4B, MYO7B, USH1C, CDHR2 and CDHR5. Interacts with USH1C; the interaction is direct and is required for ANKS4B localization to the tip of microvilli. Interacts with MYO7B; the interaction is direct. May interact with HSPA5. In terms of tissue distribution, cochlea, kidney, lung, liver, pancreas, salivary gland and small intestine (at protein level). Expressed in kidney, small intestine, pancreas, liver and colon. Not detected in heart, spleen and brain.

The protein resides in the cell projection. It localises to the microvillus. Its function is as follows. As part of the intermicrovillar adhesion complex/IMAC plays a role in epithelial brush border differentiation, controlling microvilli organization and length. Plays a role in assembly of the complex. May play a role in cellular response to endoplasmic reticulum stress. The sequence is that of Ankyrin repeat and SAM domain-containing protein 4B from Mus musculus (Mouse).